A 429-amino-acid chain; its full sequence is Bifunctional protein GlmU (429 aa).

Residues 1-223 (MKTSILILAA…EDEFMGINDK (223 aa)) are pyrophosphorylase. UDP-N-acetyl-alpha-D-glucosamine-binding positions include 8–11 (LAAG), Lys-22, Gln-74, and 81–82 (GT). Residue Asp-102 participates in Mg(2+) binding. Gly-135, Glu-149, Asn-164, and Asn-221 together coordinate UDP-N-acetyl-alpha-D-glucosamine. Mg(2+) is bound at residue Asn-221. A linker region spans residues 224–244 (FELSIAENFMQEKIKKYWMQQ). The tract at residues 245 to 429 (GVIFHLPQST…KNYYYKKFQK (185 aa)) is N-acetyltransferase. UDP-N-acetyl-alpha-D-glucosamine contacts are provided by Arg-308 and Lys-325. His-336 acts as the Proton acceptor in catalysis. Residues Tyr-339 and Asn-350 each contribute to the UDP-N-acetyl-alpha-D-glucosamine site. Residues 359–360 (NY), Ser-378, Ala-396, and Arg-413 each bind acetyl-CoA.

In the N-terminal section; belongs to the N-acetylglucosamine-1-phosphate uridyltransferase family. This sequence in the C-terminal section; belongs to the transferase hexapeptide repeat family. In terms of assembly, homotrimer. Mg(2+) serves as cofactor.

Its subcellular location is the cytoplasm. The catalysed reaction is alpha-D-glucosamine 1-phosphate + acetyl-CoA = N-acetyl-alpha-D-glucosamine 1-phosphate + CoA + H(+). It catalyses the reaction N-acetyl-alpha-D-glucosamine 1-phosphate + UTP + H(+) = UDP-N-acetyl-alpha-D-glucosamine + diphosphate. The protein operates within nucleotide-sugar biosynthesis; UDP-N-acetyl-alpha-D-glucosamine biosynthesis; N-acetyl-alpha-D-glucosamine 1-phosphate from alpha-D-glucosamine 6-phosphate (route II): step 2/2. It functions in the pathway nucleotide-sugar biosynthesis; UDP-N-acetyl-alpha-D-glucosamine biosynthesis; UDP-N-acetyl-alpha-D-glucosamine from N-acetyl-alpha-D-glucosamine 1-phosphate: step 1/1. It participates in bacterial outer membrane biogenesis; LPS lipid A biosynthesis. Functionally, catalyzes the last two sequential reactions in the de novo biosynthetic pathway for UDP-N-acetylglucosamine (UDP-GlcNAc). The C-terminal domain catalyzes the transfer of acetyl group from acetyl coenzyme A to glucosamine-1-phosphate (GlcN-1-P) to produce N-acetylglucosamine-1-phosphate (GlcNAc-1-P), which is converted into UDP-GlcNAc by the transfer of uridine 5-monophosphate (from uridine 5-triphosphate), a reaction catalyzed by the N-terminal domain. This Campylobacter jejuni subsp. doylei (strain ATCC BAA-1458 / RM4099 / 269.97) protein is Bifunctional protein GlmU.